The primary structure comprises 117 residues: Small nuclear ribonucleoprotein Sm D1 (117 aa).

One can recognise a Sm domain in the interval Lys2 to Leu74. The interval Ile81–Phe117 is disordered. Residues Pro87–Phe117 show a composition bias toward basic residues.

The protein belongs to the snRNP core protein family. In terms of assembly, belongs to the 40S cdc5-associated complex (or cwf complex), a spliceosome sub-complex reminiscent of a late-stage spliceosome composed of the U2, U5 and U6 snRNAs and at least brr2, cdc5, cwf2/prp3, cwf3/syf1, cwf4/syf3, cwf5/ecm2, spp42/cwf6, cwf7/spf27, cwf8, cwf9, cwf10, cwf11, cwf12, prp45/cwf13, cwf14, cwf15, cwf16, cwf17, cwf18, cwf19, cwf20, cwf21, cwf22, cwf23, cwf24, cwf25, cwf26, cyp7/cwf27, cwf28, cwf29/ist3, lea1, msl1, prp5/cwf1, prp10, prp12/sap130, prp17, prp22, sap61, sap62, sap114, sap145, slu7, smb1, smd1, smd3, smf1, smg1 and syf2. Interacts with saf5; the interaction is direct.

The protein resides in the nucleus. Its subcellular location is the cytoplasm. Plays a role in pre-mRNA splicing as a core component of the spliceosomal U1, U2, U4 and U5 small nuclear ribonucleoproteins (snRNPs), the building blocks of the spliceosome. This is Small nuclear ribonucleoprotein Sm D1 (smd1) from Schizosaccharomyces pombe (strain 972 / ATCC 24843) (Fission yeast).